Here is an 863-residue protein sequence, read N- to C-terminus: Potassium/sodium hyperpolarization-activated cyclic nucleotide-gated channel 2 (863 aa).

Over residues 1-10 the composition is skewed to gly residues; it reads MDARGGGGRP. The segment at 1–131 is disordered; sequence MDARGGGGRP…AGPAGEPRGS (131 aa). The Cytoplasmic segment spans residues 1-188; it reads MDARGGGGRP…PYSDFRFYWD (188 aa). A compositionally biased stretch (pro residues) spans 17-47; it reads TPAPGPPPPPPPPAPPQPQPPPAPPPNPTTP. Over residues 106–128 the composition is skewed to low complexity; that stretch reads GAASGPSAAEEAGSEEAGPAGEP. 2 positions are modified to phosphoserine: serine 119 and serine 134. Positions 131 to 182 are involved in subunit assembly; the sequence is SQASFLQRQFGALLQPGVNKFSLRMFGSQKAVEREQERVKSAGAWIIHPYSD. A helical membrane pass occupies residues 189–209; it reads FTMLLFMVGNLIIIPVGITFF. The Extracellular segment spans residues 210 to 213; it reads KDET. The chain crosses the membrane as a helical span at residues 214–234; it reads TAPWIVFNVVSDTFFLMDLVL. The Cytoplasmic segment spans residues 235-261; that stretch reads NFRTGIVIEDNTEIILDPEKIKKKYLR. Residues 262–282 traverse the membrane as a helical segment; that stretch reads TWFVVDFVSSIPVDYIFLIVE. The Extracellular portion of the chain corresponds to 283 to 290; that stretch reads KGIDSEVY. Residues 291 to 311 traverse the membrane as a helical; Voltage-sensor segment; the sequence is KTARALRIVRFTKILSLLRLL. The Cytoplasmic portion of the chain corresponds to 312-342; sequence RLSRLIRYIHQWEEIFHMTYDLASAVMRICN. Residues 343 to 363 form a helical membrane-spanning segment; the sequence is LISMMLLLCHWDGCLQFLVPM. The Extracellular segment spans residues 364–386; it reads LQDFPSDCWVSINNMVNHSWSEL. Asparagine 380 carries N-linked (GlcNAc...) asparagine glycosylation. Positions 387-408 form an intramembrane region, pore-forming; it reads YSFALFKAMSHMLCIGYGRQAP. Residues 409–413 lie on the Extracellular side of the membrane; the sequence is ESMTD. Residues 414–434 form a helical membrane-spanning segment; that stretch reads IWLTMLSMIVGATCYAMFIGH. Residues 435–863 are Cytoplasmic-facing; that stretch reads ATALIQSLDS…SARSRLSSNL (429 aa). 6 residues coordinate 3',5'-cyclic AMP: glycine 581, glutamate 582, cysteine 584, arginine 591, threonine 592, and arginine 632. A Phosphoserine; by PKG/PRKG2 modification is found at serine 641. Serine 726 is subject to Phosphoserine. At arginine 728 the chain carries Omega-N-methylarginine. Residues 730–863 are disordered; it reads VRRAPPGPLP…SARSRLSSNL (134 aa). Positions 734-755 are enriched in pro residues; it reads PPGPLPPAASPGPPAASPPAAP. Phosphoserine is present on residues serine 743, serine 750, and serine 757. Composition is skewed to low complexity over residues 756–765, 778–800, and 808–834; these read SSPRAPRTSP, PALP…PSLP, and PAAS…AAPS. Phosphoserine occurs at positions 840, 842, and 847.

It belongs to the potassium channel HCN family. In terms of assembly, homotetramer. The channel is composed of a homo- or heterotetrameric complex of pore-forming subunits. Heterotetramer with HCN1. Forms an obligate 4:4 complex with accessory subunit PEX5L; regulates HCN2 cell-surface expression and cyclic nucleotide dependence. Interacts with KCNE2. In terms of processing, S-palmitoylated. N-glycosylated; required for cell surface trafficking of HCN2. Post-translationally, phosphorylation at Ser-641 by PRKG2 shifts the voltage-dependence to more negative voltages, hence counteracting the stimulatory effect of cGMP on gating. Highly expressed in brain. Detected at low levels in heart, in ventricle, atrium and in sinoatrial node (SAN).

It localises to the cell membrane. It catalyses the reaction Na(+)(in) = Na(+)(out). The enzyme catalyses K(+)(in) = K(+)(out). It carries out the reaction NH4(+)(in) = NH4(+)(out). Its activity is regulated as follows. Activated by cAMP, and at 10-100 times higher concentrations, also by cGMP. cAMP binding causes a conformation change that leads to the assembly of an active tetramer and channel opening. In the absence of cAMP, the C-terminal region is thought to exert a tonic inhibition on the pore when HCN2 is in a non-tetrameric form. Channel activity is modulated by intracellular chloride ions and pH; acidic pH shifts the activation to more negative voltages. Phosphatidylinositol-4,5- bisphosphate (PIP(2)) acts as a ligand that allosterically opens HCN2 by shifting voltage-dependent channel activation toward depolarized potentials. Inhibited by extracellular cesium ions. In terms of biological role, hyperpolarization-activated ion channel exhibiting weak selectivity for potassium over sodium ions. Contributes to the native pacemaker currents in heart (If) and in neurons (Ih). Can also transport ammonium in the distal nephron. Involved in the initiation of neuropathic pain in sensory neurons. The sequence is that of Potassium/sodium hyperpolarization-activated cyclic nucleotide-gated channel 2 from Mus musculus (Mouse).